The sequence spans 110 residues: MHVKTGDEVLVIAGKDKGRRGKIKRALPAVNRVVVEGLNIVKRHQKPRGPGRPGGIVEMEAPIHVSNVMLICPSCGRASRTGKRFLEETDHKGRPRKVRYCKACDAIIDK.

This sequence belongs to the universal ribosomal protein uL24 family. Part of the 50S ribosomal subunit.

Functionally, one of two assembly initiator proteins, it binds directly to the 5'-end of the 23S rRNA, where it nucleates assembly of the 50S subunit. One of the proteins that surrounds the polypeptide exit tunnel on the outside of the subunit. The protein is Large ribosomal subunit protein uL24 of Chloroflexus aggregans (strain MD-66 / DSM 9485).